Reading from the N-terminus, the 180-residue chain is Putative 5'(3')-deoxyribonucleotidase (180 aa).

The active-site Nucleophile is the aspartate 9. The Mg(2+) site is built by aspartate 9, aspartate 11, and aspartate 135. Aspartate 11 acts as the Proton donor in catalysis.

It belongs to the 5'(3')-deoxyribonucleotidase family. The cofactor is Mg(2+).

Dephosphorylates the 5' and 2'(3')-phosphates of deoxyribonucleotides. This chain is Putative 5'(3')-deoxyribonucleotidase, found in Staphylococcus aureus (strain MSSA476).